The following is a 1089-amino-acid chain: Probable transport protein MmpL8 (1089 aa).

The tract at residues 1-26 (MCDVLMQPVRTPRPSTNLRSKPLRPT) is disordered. 12 helical membrane passes run 44–64 (WVVI…VPSL), 222–242 (ITIL…TMVL), 257–277 (LVAI…IFMS), 316–336 (IGKV…GMVF), 349–369 (LGIS…ALMV), 400–420 (KTHL…AGLA), 555–575 (AIST…LLGG), 874–894 (IIAM…RAIV), 898–918 (YLIG…VIVF), 930–950 (IPGL…MLLI), 973–993 (GGVI…LVFA), and 996–1016 (GSVV…TFLV). The tract at residues 1056–1078 (RTKRKPLLPKEEEEQSPPDDDDL) is disordered. Over residues 1066 to 1078 (EEEEQSPPDDDDL) the composition is skewed to acidic residues.

Belongs to the resistance-nodulation-cell division (RND) (TC 2.A.6) family. MmpL subfamily.

It is found in the cell membrane. The chain is Probable transport protein MmpL8 (mmpL8) from Mycobacterium bovis (strain ATCC BAA-935 / AF2122/97).